The primary structure comprises 206 residues: Protein SUE1, mitochondrial (206 aa).

A mitochondrion-targeting transit peptide spans 1–24 (MILLKRTKIRGVSVSFVSLQRRTH).

It localises to the mitochondrion envelope. In terms of biological role, required for degradation of unstable forms of cytochrome c. The sequence is that of Protein SUE1, mitochondrial from Saccharomyces cerevisiae (strain ATCC 204508 / S288c) (Baker's yeast).